A 477-amino-acid polypeptide reads, in one-letter code: MEWDTVIGLEVHAQLKTKSKLFSGASTAFGATPNSQTSFIDAGLPGVLPVLNEQAIIMAIQFGLAIHGTINDLSVFERKNYFYSDLPKGYQISQYQKPIVTNGYLNIQLGNNLEKTVHIARAHLEEDAGKSLHDAHTDYTGIDLNRAGTPLLEIVTTPCLHSAEEAINYLKTLHQLVRFLGICDGNMQEGSFRCDVNLSIKPKGSSVLGTRTELKNLNSFRFIEKAIAFEQARHQDILESGLSVIQETRLYNPDNNTTQAMRGKENENDYRYFPDPDLLPIHIDKEQIEAIKNNLPDLPEAISKELKNTPSLNDEDINFILSSPDTYQYYKKIKSLCPAADKTIINWLKGQYAAFLNEHNLTFETPPISAKTMAAFLSKIHEKKISSSIAKNIFSMLCTGEKDIDAIIEREGYQQQNDNSALEEIVEQIIKQYPEQVTEYKAGKEKLLAFFIGQAMKQTKGKANPEQINLLLKKHLG.

This sequence belongs to the GatB/GatE family. GatB subfamily. As to quaternary structure, heterotrimer of A, B and C subunits.

The catalysed reaction is L-glutamyl-tRNA(Gln) + L-glutamine + ATP + H2O = L-glutaminyl-tRNA(Gln) + L-glutamate + ADP + phosphate + H(+). It carries out the reaction L-aspartyl-tRNA(Asn) + L-glutamine + ATP + H2O = L-asparaginyl-tRNA(Asn) + L-glutamate + ADP + phosphate + 2 H(+). Functionally, allows the formation of correctly charged Asn-tRNA(Asn) or Gln-tRNA(Gln) through the transamidation of misacylated Asp-tRNA(Asn) or Glu-tRNA(Gln) in organisms which lack either or both of asparaginyl-tRNA or glutaminyl-tRNA synthetases. The reaction takes place in the presence of glutamine and ATP through an activated phospho-Asp-tRNA(Asn) or phospho-Glu-tRNA(Gln). The protein is Aspartyl/glutamyl-tRNA(Asn/Gln) amidotransferase subunit B of Legionella pneumophila (strain Corby).